We begin with the raw amino-acid sequence, 387 residues long: GTPase Obg (387 aa).

The 159-residue stretch at 1–159 (MKFVDEVEIR…RSLKLELLLL (159 aa)) folds into the Obg domain. The 174-residue stretch at 160–333 (ADVGLLGLPN…LTQKVMTFIE (174 aa)) folds into the OBG-type G domain. GTP-binding positions include 166 to 173 (GLPNAGKS), 191 to 195 (FTTLV), 213 to 216 (DIPG), 283 to 286 (NKLD), and 314 to 316 (SAF). Serine 173 and threonine 193 together coordinate Mg(2+). Residues 361–387 (AAHSQDDDLDDDDWDEDDYDVEVEYRQ) form a disordered region. The segment covering 367–387 (DDLDDDDWDEDDYDVEVEYRQ) has biased composition (acidic residues).

This sequence belongs to the TRAFAC class OBG-HflX-like GTPase superfamily. OBG GTPase family. In terms of assembly, monomer. Requires Mg(2+) as cofactor.

Its subcellular location is the cytoplasm. In terms of biological role, an essential GTPase which binds GTP, GDP and possibly (p)ppGpp with moderate affinity, with high nucleotide exchange rates and a fairly low GTP hydrolysis rate. Plays a role in control of the cell cycle, stress response, ribosome biogenesis and in those bacteria that undergo differentiation, in morphogenesis control. The protein is GTPase Obg of Colwellia psychrerythraea (strain 34H / ATCC BAA-681) (Vibrio psychroerythus).